A 184-amino-acid polypeptide reads, in one-letter code: ATP synthase subunit b, chloroplastic (184 aa).

Residues 27-49 (LATNLINLSVVLGVLIFFGKGVL) traverse the membrane as a helical segment.

This sequence belongs to the ATPase B chain family. As to quaternary structure, F-type ATPases have 2 components, F(1) - the catalytic core - and F(0) - the membrane proton channel. F(1) has five subunits: alpha(3), beta(3), gamma(1), delta(1), epsilon(1). F(0) has four main subunits: a(1), b(1), b'(1) and c(10-14). The alpha and beta chains form an alternating ring which encloses part of the gamma chain. F(1) is attached to F(0) by a central stalk formed by the gamma and epsilon chains, while a peripheral stalk is formed by the delta, b and b' chains.

The protein localises to the plastid. It is found in the chloroplast thylakoid membrane. Functionally, f(1)F(0) ATP synthase produces ATP from ADP in the presence of a proton or sodium gradient. F-type ATPases consist of two structural domains, F(1) containing the extramembraneous catalytic core and F(0) containing the membrane proton channel, linked together by a central stalk and a peripheral stalk. During catalysis, ATP synthesis in the catalytic domain of F(1) is coupled via a rotary mechanism of the central stalk subunits to proton translocation. Component of the F(0) channel, it forms part of the peripheral stalk, linking F(1) to F(0). The chain is ATP synthase subunit b, chloroplastic from Spinacia oleracea (Spinach).